Reading from the N-terminus, the 225-residue chain is Urease accessory protein UreE (225 aa).

Basic and acidic residues-rich tracts occupy residues 189–202 (HSHDFMGHSHEHEG) and 212–225 (NSHDNEHDEHHSRR). Positions 189 to 225 (HSHDFMGHSHEHEGHRHVHNHAGNSHDNEHDEHHSRR) are disordered.

The protein belongs to the UreE family.

The protein resides in the cytoplasm. In terms of biological role, involved in urease metallocenter assembly. Binds nickel. Probably functions as a nickel donor during metallocenter assembly. In Edwardsiella ictaluri, this protein is Urease accessory protein UreE.